We begin with the raw amino-acid sequence, 330 residues long: MNVYYEQDADLGYLQGKNIAVLGYGSQGHAHALNLKESGLNVCVGLRPESASCAKAREAGLEVNTVAEATKWADIVMVLLPDQNQKAVYDAEIAPNLVAGNTLAFGHGFNIHYKQIIPAESINVIMIAPKSPGHLVRRTFTEGNGVPCLIAVHQDATGEAKQQALAWAKALGGTKAGVIETSIKNETETDLFGEQAVLCGGSAELIKAGFETLVEAGYPEELAYFECMHELKLIVDLYYEGGLSRMNYSVSDTAEYGGMTRGPRLITPAVKAEMKKILEEVQDGRFAKEFIDECNGGYKNLNKLREENSGHAIEKVGAKLRDMMSWLIKK.

The 181-residue stretch at 1-181 (MNVYYEQDAD…GGTKAGVIET (181 aa)) folds into the KARI N-terminal Rossmann domain. Residues 24 to 27 (YGSQ), R47, S50, S52, and 82 to 85 (DQNQ) contribute to the NADP(+) site. H107 is an active-site residue. NADP(+) is bound at residue G133. Residues 182 to 327 (SIKNETETDL…AKLRDMMSWL (146 aa)) form the KARI C-terminal knotted domain. The Mg(2+) site is built by D190, E194, E226, and E230. Residue S251 participates in substrate binding.

This sequence belongs to the ketol-acid reductoisomerase family. The cofactor is Mg(2+).

It catalyses the reaction (2R)-2,3-dihydroxy-3-methylbutanoate + NADP(+) = (2S)-2-acetolactate + NADPH + H(+). It carries out the reaction (2R,3R)-2,3-dihydroxy-3-methylpentanoate + NADP(+) = (S)-2-ethyl-2-hydroxy-3-oxobutanoate + NADPH + H(+). Its pathway is amino-acid biosynthesis; L-isoleucine biosynthesis; L-isoleucine from 2-oxobutanoate: step 2/4. The protein operates within amino-acid biosynthesis; L-valine biosynthesis; L-valine from pyruvate: step 2/4. Its function is as follows. Involved in the biosynthesis of branched-chain amino acids (BCAA). Catalyzes an alkyl-migration followed by a ketol-acid reduction of (S)-2-acetolactate (S2AL) to yield (R)-2,3-dihydroxy-isovalerate. In the isomerase reaction, S2AL is rearranged via a Mg-dependent methyl migration to produce 3-hydroxy-3-methyl-2-ketobutyrate (HMKB). In the reductase reaction, this 2-ketoacid undergoes a metal-dependent reduction by NADPH to yield (R)-2,3-dihydroxy-isovalerate. This chain is Ketol-acid reductoisomerase (NADP(+)), found in Pelodictyon phaeoclathratiforme (strain DSM 5477 / BU-1).